A 249-amino-acid polypeptide reads, in one-letter code: Small ribosomal subunit protein uS4m (249 aa).

The region spanning 133-193 is the S4 RNA-binding domain; it reads RRLDIIIYRA…PEIVNLLRNQ (61 aa).

The protein belongs to the universal ribosomal protein uS4 family.

Its subcellular location is the mitochondrion. The chain is Small ribosomal subunit protein uS4m (RPS4) from Reclinomonas americana.